Reading from the N-terminus, the 93-residue chain is Small ribosomal subunit protein uS19 (93 aa).

The protein belongs to the universal ribosomal protein uS19 family.

Its function is as follows. Protein S19 forms a complex with S13 that binds strongly to the 16S ribosomal RNA. This chain is Small ribosomal subunit protein uS19, found in Streptococcus gordonii (strain Challis / ATCC 35105 / BCRC 15272 / CH1 / DL1 / V288).